The chain runs to 542 residues: Chaperonin GroEL 3 (542 aa).

ATP is bound by residues 30–33, lysine 51, 87–91, glycine 415, and aspartate 494; these read TLGP and DGTTT. The segment at 523 to 542 is disordered; sequence KPKKKEPPMPAMPSDMGDYD.

This sequence belongs to the chaperonin (HSP60) family. In terms of assembly, forms a cylinder of 14 subunits composed of two heptameric rings stacked back-to-back. Interacts with the co-chaperonin GroES.

It is found in the cytoplasm. The enzyme catalyses ATP + H2O + a folded polypeptide = ADP + phosphate + an unfolded polypeptide.. Together with its co-chaperonin GroES, plays an essential role in assisting protein folding. The GroEL-GroES system forms a nano-cage that allows encapsulation of the non-native substrate proteins and provides a physical environment optimized to promote and accelerate protein folding. The protein is Chaperonin GroEL 3 of Syntrophus aciditrophicus (strain SB).